A 380-amino-acid chain; its full sequence is Flap endonuclease 1-A (380 aa).

Residues 1–105 (MGIKGLTKLL…QELAKRYSKR (105 aa)) form an N-domain region. Asp-34 is a binding site for Mg(2+). Arg-71 is a DNA binding site. Mg(2+) contacts are provided by Asp-87, Glu-159, Glu-161, Asp-180, and Asp-182. The segment at 123–254 (AIEKFSKRTV…QTALKLIRQH (132 aa)) is I-domain. A DNA-binding site is contributed by Glu-159. 2 residues coordinate DNA: Gly-232 and Asp-234. Mg(2+) is bound at residue Asp-234. Residues 336–344 (SQGRLESFF) are interaction with PCNA. Residues 351–380 (SVPLKRKDTSEKPTKAVANKKTKGAGGKKK) are disordered. Residues 355-364 (KRKDTSEKPT) are compositionally biased toward basic and acidic residues. Basic residues predominate over residues 368–380 (ANKKTKGAGGKKK).

It belongs to the XPG/RAD2 endonuclease family. FEN1 subfamily. Interacts with PCNA. Three molecules of FEN1 bind to one PCNA trimer with each molecule binding to one PCNA monomer. PCNA stimulates the nuclease activity without altering cleavage specificity. Mg(2+) serves as cofactor. Post-translationally, phosphorylated. Phosphorylation upon DNA damage induces relocalization to the nuclear plasma. In terms of tissue distribution, strongly expressed in proliferating tissues: root and shoot apical meristem, tiller bud, leaf, ligule primordia, marginal meristem of young leaves and panicles. Not expressed in mature leaves when exposed to UV.

The protein resides in the nucleus. It is found in the nucleolus. It localises to the nucleoplasm. The protein localises to the mitochondrion. Inhibited by NaCl. Its function is as follows. Structure-specific nuclease with 5'-flap endonuclease and 5'-3' exonuclease activities involved in DNA replication and repair. During DNA replication, cleaves the 5'-overhanging flap structure that is generated by displacement synthesis when DNA polymerase encounters the 5'-end of a downstream Okazaki fragment. It enters the flap from the 5'-end and then tracks to cleave the flap base, leaving a nick for ligation. Also involved in the long patch base excision repair (LP-BER) pathway, by cleaving within the apurinic/apyrimidinic (AP) site-terminated flap. Acts as a genome stabilization factor that prevents flaps from equilibrating into structures that lead to duplications and deletions. Also possesses 5'-3' exonuclease activity on nicked or gapped double-stranded DNA, and exhibits RNase H activity. Also involved in replication and repair of rDNA and in repairing mitochondrial DNA. May be required for cell proliferation. In Oryza sativa subsp. japonica (Rice), this protein is Flap endonuclease 1-A.